Consider the following 199-residue polypeptide: dITP/XTP pyrophosphatase (199 aa).

Residue 8–13 (SGNAGK) participates in substrate binding. Asp-69 acts as the Proton acceptor in catalysis. Asp-69 contributes to the Mg(2+) binding site. Substrate is bound by residues Ser-70, 154-157 (FGYN), Lys-177, and 182-183 (HR).

It belongs to the HAM1 NTPase family. In terms of assembly, homodimer. It depends on Mg(2+) as a cofactor.

The enzyme catalyses XTP + H2O = XMP + diphosphate + H(+). It catalyses the reaction dITP + H2O = dIMP + diphosphate + H(+). It carries out the reaction ITP + H2O = IMP + diphosphate + H(+). Functionally, pyrophosphatase that catalyzes the hydrolysis of nucleoside triphosphates to their monophosphate derivatives, with a high preference for the non-canonical purine nucleotides XTP (xanthosine triphosphate), dITP (deoxyinosine triphosphate) and ITP. Seems to function as a house-cleaning enzyme that removes non-canonical purine nucleotides from the nucleotide pool, thus preventing their incorporation into DNA/RNA and avoiding chromosomal lesions. The protein is dITP/XTP pyrophosphatase of Xanthomonas axonopodis pv. citri (strain 306).